The sequence spans 79 residues: uncharacterized protein (79 aa).

It belongs to the asfivirus D79L family.

This is an uncharacterized protein from African swine fever virus (strain Badajoz 1971 Vero-adapted) (Ba71V).